Consider the following 378-residue polypeptide: Chaperone protein DnaJ (378 aa).

The J domain occupies Asp-6–Gly-70. Residues Gly-137–Lys-219 form a CR-type zinc finger. Zn(2+)-binding residues include Cys-150, Cys-153, Cys-167, Cys-170, Cys-193, Cys-196, Cys-207, and Cys-210. 4 CXXCXGXG motif repeats span residues Cys-150–Gly-157, Cys-167–Gly-174, Cys-193–Gly-200, and Cys-207–Gly-214.

The protein belongs to the DnaJ family. In terms of assembly, homodimer. Requires Zn(2+) as cofactor.

The protein resides in the cytoplasm. Participates actively in the response to hyperosmotic and heat shock by preventing the aggregation of stress-denatured proteins and by disaggregating proteins, also in an autonomous, DnaK-independent fashion. Unfolded proteins bind initially to DnaJ; upon interaction with the DnaJ-bound protein, DnaK hydrolyzes its bound ATP, resulting in the formation of a stable complex. GrpE releases ADP from DnaK; ATP binding to DnaK triggers the release of the substrate protein, thus completing the reaction cycle. Several rounds of ATP-dependent interactions between DnaJ, DnaK and GrpE are required for fully efficient folding. Also involved, together with DnaK and GrpE, in the DNA replication of plasmids through activation of initiation proteins. The sequence is that of Chaperone protein DnaJ from Lactobacillus delbrueckii subsp. bulgaricus (strain ATCC BAA-365 / Lb-18).